The chain runs to 443 residues: MISGDSIVALSSGRLPAGVAVLRISGPQTRFVVETIAGGMVKDRVAVLRRFKAPDGTVLDSGLVIFFPGPASFTGEDVAEFHVHGGRAVVARMLEIISGFDGVRHAEPGEFTRRAFLNGKVDLVETEALADLVNAETEAQRRFAVRNAEGVQSELYLSWRRRLIHARAMIEAEIDFADEDDVPGSVSDTVWSDVRAMIGEIDRHIAGFHAAEIIREGFEVVILGAPNAGKSSLFNALARRDAAIVTDEPGTTRDLLEVTLDLGGLRVRLTDTAGLREAPGKVEAIGIEKARAKADRADLLLLLEDILAPGVLGPLPGKAPLLRVGTKLDLLDEGSAREAAGRYDVAISVVGGTGVEALLAEIGRRAADAAGDVGDVLPSRLRHVELLGEANRHLLRAAAEDAAGQELRAEELRLAADSLGRIVGAIDVEDMLDVIFSQFCIGK.

Residues Arg23, Glu80, and Lys120 each contribute to the (6S)-5-formyl-5,6,7,8-tetrahydrofolate site. The 151-residue stretch at 217 to 367 (GFEVVILGAP…LLAEIGRRAA (151 aa)) folds into the TrmE-type G domain. Residues 227–232 (NAGKSS), 246–252 (TDEPGTT), and 271–274 (DTAG) contribute to the GTP site. The Mg(2+) site is built by Ser231 and Thr252. Lys443 serves as a coordination point for (6S)-5-formyl-5,6,7,8-tetrahydrofolate.

Belongs to the TRAFAC class TrmE-Era-EngA-EngB-Septin-like GTPase superfamily. TrmE GTPase family. As to quaternary structure, homodimer. Heterotetramer of two MnmE and two MnmG subunits. Requires K(+) as cofactor.

It is found in the cytoplasm. Its function is as follows. Exhibits a very high intrinsic GTPase hydrolysis rate. Involved in the addition of a carboxymethylaminomethyl (cmnm) group at the wobble position (U34) of certain tRNAs, forming tRNA-cmnm(5)s(2)U34. This Mesorhizobium japonicum (strain LMG 29417 / CECT 9101 / MAFF 303099) (Mesorhizobium loti (strain MAFF 303099)) protein is tRNA modification GTPase MnmE.